Consider the following 196-residue polypeptide: Pyridoxal 5'-phosphate synthase subunit PdxT (196 aa).

An L-glutamine-binding site is contributed by glycine 47 to serine 49. Catalysis depends on cysteine 79, which acts as the Nucleophile. Residues arginine 106 and isoleucine 134 to arginine 135 contribute to the L-glutamine site. Residues histidine 170 and glutamate 172 each act as charge relay system in the active site.

It belongs to the glutaminase PdxT/SNO family. In the presence of PdxS, forms a dodecamer of heterodimers. Only shows activity in the heterodimer.

It carries out the reaction aldehydo-D-ribose 5-phosphate + D-glyceraldehyde 3-phosphate + L-glutamine = pyridoxal 5'-phosphate + L-glutamate + phosphate + 3 H2O + H(+). It catalyses the reaction L-glutamine + H2O = L-glutamate + NH4(+). It participates in cofactor biosynthesis; pyridoxal 5'-phosphate biosynthesis. Its function is as follows. Catalyzes the hydrolysis of glutamine to glutamate and ammonia as part of the biosynthesis of pyridoxal 5'-phosphate. The resulting ammonia molecule is channeled to the active site of PdxS. The chain is Pyridoxal 5'-phosphate synthase subunit PdxT from Bacillus cereus (strain Q1).